The primary structure comprises 807 residues: Putative histidine biosynthesis bifunctional protein HisCD (807 aa).

A histidinol dehydrogenase region spans residues Met-1–Asn-440. Zn(2+) is bound by residues Gln-261 and His-264. Catalysis depends on residues Glu-328 and His-329. Zn(2+) contacts are provided by Asp-362 and His-421. A histidinol-phosphate aminotransferase region spans residues Met-441–Asn-807. N6-(pyridoxal phosphate)lysine is present on Lys-655.

It in the N-terminal section; belongs to the histidinol dehydrogenase family. This sequence in the C-terminal section; belongs to the class-II pyridoxal-phosphate-dependent aminotransferase family. Histidinol-phosphate aminotransferase subfamily. Homodimer. Zn(2+) is required as a cofactor. The cofactor is pyridoxal 5'-phosphate.

The enzyme catalyses L-histidinol phosphate + 2-oxoglutarate = 3-(imidazol-4-yl)-2-oxopropyl phosphate + L-glutamate. It catalyses the reaction L-histidinol + 2 NAD(+) + H2O = L-histidine + 2 NADH + 3 H(+). It functions in the pathway amino-acid biosynthesis; L-histidine biosynthesis; L-histidine from 5-phospho-alpha-D-ribose 1-diphosphate: step 7/9. Its pathway is amino-acid biosynthesis; L-histidine biosynthesis; L-histidine from 5-phospho-alpha-D-ribose 1-diphosphate: step 9/9. Catalyzes the sequential NAD-dependent oxidations of L-histidinol to L-histidinaldehyde and then to L-histidine. The sequence is that of Putative histidine biosynthesis bifunctional protein HisCD (hisCD) from Photorhabdus laumondii subsp. laumondii (strain DSM 15139 / CIP 105565 / TT01) (Photorhabdus luminescens subsp. laumondii).